The primary structure comprises 1008 residues: Histone deacetylase complex subunit SAP130-A (1008 aa).

The segment covering 1–31 has biased composition (polar residues); that stretch reads MNSQQFPRQAASMPSPQVSNSGASVGQNVQG. 4 disordered regions span residues 1-44, 113-134, 415-435, and 617-720; these read MNSQ…DVQS, SKSTMPSRPIAPAPPSAMSAVP, IQSDYGTERGNLIPIPGHRAS, and TPGG…PATI. Basic and acidic residues predominate over residues 35–44; the sequence is EVARDMDVQS. Over residues 618 to 644 the composition is skewed to polar residues; it reads PGGTTVMQSHSQSPGIGSSPAQGSSPR. Low complexity predominate over residues 678-697; that stretch reads ADQPSAAASLPSSHHPAAAV.

It belongs to the SAP130 family.

It is found in the nucleus. Functionally, acts as a transcriptional repressor. The polypeptide is Histone deacetylase complex subunit SAP130-A (sap130-a) (Xenopus laevis (African clawed frog)).